We begin with the raw amino-acid sequence, 555 residues long: Alpha-1,2-mannosyltransferase ALG9 (555 aa).

At 1-7 the chain is on the cytoplasmic side; it reads MNCKAVT. A helical transmembrane segment spans residues 8–28; the sequence is ISLLLLLFLTRVYIQPTFSLI. At 29–62 the chain is on the lumenal side; sequence SDCDETFNYWEPLNLLVRGFGKQTWEYSPEYSIR. A helical transmembrane segment spans residues 63–83; sequence SWAFLLPFYCILYPVNKFTDL. The Cytoplasmic segment spans residues 84 to 86; it reads ESH. Residues 87-107 form a helical membrane-spanning segment; that stretch reads WNFFITRACLGFFSFIMEFKL. Residues 108–113 lie on the Lumenal side of the membrane; sequence HREIAG. A helical transmembrane segment spans residues 114 to 134; sequence SLALQIANIWIIFQLFNPGWF. The Cytoplasmic segment spans residues 135–176; the sequence is HASVELLPSAVAMLLYVGATRHSLRYLSTGSTSNFTKSLAYN. A helical transmembrane segment spans residues 177–197; the sequence is FLASILGWPFVLILSLPLCLH. Over 198-213 the chain is Lumenal; the sequence is YLFNHRIISTIRTAFD. Residues 214–234 form a helical membrane-spanning segment; sequence CCLIFSLTAFAVIVTDSIFYG. Residues 235–268 lie on the Cytoplasmic side of the membrane; that stretch reads KLAPVSWNILFYNVINASEESGPNIFGVEPWYYY. A helical membrane pass occupies residues 269–289; sequence PLNLLLNFPLPVLVLAILGIF. Residues 290-316 lie on the Lumenal side of the membrane; that stretch reads HLRLWPLWASLFTWIAVFTQQPHKEER. The chain crosses the membrane as a helical span at residues 317–337; it reads FLYPIYGLITLSASIAFYKVL. Over 338–349 the chain is Cytoplasmic; sequence NLFNRKPILKKG. Residues 350-370 traverse the membrane as a helical segment; sequence IKLSVLLIVAGQAMSRIVALV. The Lumenal segment spans residues 371 to 555; it reads NNYTAPIAVY…LFEKPTETTN (185 aa).

The protein belongs to the glycosyltransferase 22 family.

The protein localises to the endoplasmic reticulum membrane. The enzyme catalyses an alpha-D-Man-(1-&gt;2)-alpha-D-Man-(1-&gt;2)-alpha-D-Man-(1-&gt;3)-[alpha-D-Man-(1-&gt;3)-alpha-D-Man-(1-&gt;6)]-beta-D-Man-(1-&gt;4)-beta-D-GlcNAc-(1-&gt;4)-alpha-D-GlcNAc-diphospho-di-trans,poly-cis-dolichol + a di-trans,poly-cis-dolichyl beta-D-mannosyl phosphate = an alpha-D-Man-(1-&gt;2)-alpha-D-Man-(1-&gt;2)-alpha-D-Man-(1-&gt;3)-[alpha-D-Man-(1-&gt;2)-alpha-D-Man-(1-&gt;3)-alpha-D-Man-(1-&gt;6)]-beta-D-Man-(1-&gt;4)-beta-D-GlcNAc-(1-&gt;4)-alpha-D-GlcNAc-diphospho-di-trans,poly-cis-dolichol + a di-trans,poly-cis-dolichyl phosphate + H(+). It carries out the reaction an alpha-D-Man-(1-&gt;2)-alpha-D-Man-(1-&gt;2)-alpha-D-Man-(1-&gt;3)-[alpha-D-Man-(1-&gt;2)-alpha-D-Man-(1-&gt;3)-[alpha-D-Man-(1-&gt;6)]-alpha-D-Man-(1-&gt;6)]-beta-D-Man-(1-&gt;4)-beta-D-GlcNAc-(1-&gt;4)-alpha-D-GlcNAc-diphospho-di-trans,poly-cis-dolichol + a di-trans,poly-cis-dolichyl beta-D-mannosyl phosphate = an alpha-D-Man-(1-&gt;2)-alpha-D-Man-(1-&gt;2)-alpha-D-Man-(1-&gt;3)-[alpha-D-Man-(1-&gt;2)-alpha-D-Man-(1-&gt;3)-[alpha-D-Man-(1-&gt;2)-alpha-D-Man-(1-&gt;6)]-alpha-D-Man-(1-&gt;6)]-beta-D-Man-(1-&gt;4)-beta-D-GlcNAc-(1-&gt;4)-alpha-D-GlcNAc-diphospho-di-trans,poly-cis-dolichol + a di-trans,poly-cis-dolichyl phosphate + H(+). Its pathway is protein modification; protein glycosylation. Functionally, mannosyltransferase that operates in the biosynthetic pathway of dolichol-linked oligosaccharides, the glycan precursors employed in protein asparagine (N)-glycosylation. The assembly of dolichol-linked oligosaccharides begins on the cytosolic side of the endoplasmic reticulum membrane and finishes in its lumen. The sequential addition of sugars to dolichol pyrophosphate produces dolichol-linked oligosaccharides containing fourteen sugars, including two GlcNAcs, nine mannoses and three glucoses. Once assembled, the oligosaccharide is transferred from the lipid to nascent proteins by oligosaccharyltransferases. In the lumen of the endoplasmic reticulum, catalyzes the addition of the seventh and ninth alpha-1,2-linked mannose residues to Man(6)GlcNAc(2)-PP-dolichol and Man(8)GlcNAc(2)-PP-dolichol respectively. The protein is Alpha-1,2-mannosyltransferase ALG9 (ALG9) of Saccharomyces cerevisiae (strain ATCC 204508 / S288c) (Baker's yeast).